A 417-amino-acid chain; its full sequence is Acetyltransferase nanB (417 aa).

Residues 1-24 form the signal peptide; the sequence is MRPSTTTLSLLVFLISSILLATTG. 5 consecutive transmembrane segments (helical) span residues 150 to 170, 284 to 304, 307 to 327, 356 to 376, and 389 to 409; these read LAVS…LKNI, YLNN…FNWI, VQDG…GYFL, VGAL…VYPF, and FVDV…AAAL.

The protein belongs to the wax synthase family.

The protein resides in the membrane. Its pathway is secondary metabolite biosynthesis. Its function is as follows. Acetyltransferase; part of the gene cluster that mediates the biosynthesis of the benzazepine alkaloid nanangelenin A which contains an unprecedented 3,4-dihydro-1-benzazepine-2,5-dione-N-prenyl-N-acetoxy-anthranilamide scaffold. The first step of nanangelenin biosynthesis is catalyzed by the indoleamine 2,3-dioxygenase nanC which produces N-formyl-kynurenine through the catabolism of tryptophan. The two-module NRPS nanA then utilizes anthranilate (Ant) and L-kynurenine (L-Kyn) to assemble the dipeptide product nanangelenin B. The first adenylation domain of nanA (A1) loads anthranilate onto the T1 domain, while A2 loads kynurenine, generated through spontaneous nonenzymatic deformylation of the nanC-supplied N-formyl-kynurenine. The peptide bond formation between the tethered amino acids is catalyzed by the first condensation domain (C1) between anthranilate's carbonyl carbon and kynurenine's aliphatic primary amine. The second C domain (C2) catalyzes the final cyclization event between the aromatic amine of kynurenine and the tethered carbonyl carbon, yielding nanangelenin B. The terminal T3 domain enhances the catalytic efficiency of C2, suggesting the T2-tethered Ant-L-Kyn is transferred to T3 prior to cyclization by C2. Once released from nanA, nanangelenin B is then prenylated by the prenyltransferase nanD to form nanangelenin C. Nanangelenin C is then N-hydroxylated by the FAD-dependent monooxygenase nanF and further acetylated by the acetyltransferase nanB to yield nanangelenin F. Finally, the N-methyltransferase nanE methylates the amide nitrogen of 1-benzazepine to convert nanangelenin F into nanangelenin A. NanE is also able to methylate most of the intermediates of the pathway such as nanangelenin B and nanangelenin C to produce nanangelenin D and nanangelenin E, respectively. This Aspergillus nanangensis protein is Acetyltransferase nanB.